A 236-amino-acid polypeptide reads, in one-letter code: Small ribosomal subunit protein uS2c (236 aa).

This sequence belongs to the universal ribosomal protein uS2 family.

The protein localises to the plastid. It is found in the chloroplast. This chain is Small ribosomal subunit protein uS2c (rps2), found in Cucumis sativus (Cucumber).